A 96-amino-acid chain; its full sequence is Co-chaperonin GroES (96 aa).

The protein belongs to the GroES chaperonin family. As to quaternary structure, heptamer of 7 subunits arranged in a ring. Interacts with the chaperonin GroEL.

It is found in the cytoplasm. Functionally, together with the chaperonin GroEL, plays an essential role in assisting protein folding. The GroEL-GroES system forms a nano-cage that allows encapsulation of the non-native substrate proteins and provides a physical environment optimized to promote and accelerate protein folding. GroES binds to the apical surface of the GroEL ring, thereby capping the opening of the GroEL channel. The polypeptide is Co-chaperonin GroES (Hyphomonas neptunium (strain ATCC 15444)).